Reading from the N-terminus, the 97-residue chain is Transcription and mRNA export factor SUS1 (97 aa).

This sequence belongs to the ENY2 family. As to quaternary structure, component of the nuclear pore complex (NPC)-associated TREX-2 complex (transcription and export complex 2), composed of at least SUS1, SAC3, THP1, SEM1, and CDC31. TREX-2 contains 2 SUS1 chains. The TREX-2 complex interacts with the nucleoporin NUP1. Component of the 1.8 MDa SAGA transcription coactivator-HAT complex. SAGA is built of 5 distinct domains with specialized functions. Within the SAGA complex, SUS1, SGF11, SGF73 and UBP8 form an additional subcomplex of SAGA called the DUB module (deubiquitination module). Interacts directly with THP1, SAC3, SGF11, and with the RNA polymerase II.

The protein resides in the nucleus. It is found in the nucleoplasm. It localises to the cytoplasm. Its subcellular location is the P-body. Involved in mRNA export coupled transcription activation by association with both the TREX-2 and the SAGA complexes. At the promoters, SAGA is required for recruitment of the basal transcription machinery. It influences RNA polymerase II transcriptional activity through different activities such as TBP interaction and promoter selectivity, interaction with transcription activators, and chromatin modification through histone acetylation and deubiquitination. Within the SAGA complex, participates in a subcomplex required for deubiquitination of H2B and for the maintenance of steady-state H3 methylation levels. The TREX-2 complex functions in docking export-competent ribonucleoprotein particles (mRNPs) to the nuclear entrance of the nuclear pore complex (nuclear basket). TREX-2 participates in mRNA export and accurate chromatin positioning in the nucleus by tethering genes to the nuclear periphery. May also be involved in cytoplasmic mRNA decay by interaction with components of P-bodies. This Meyerozyma guilliermondii (strain ATCC 6260 / CBS 566 / DSM 6381 / JCM 1539 / NBRC 10279 / NRRL Y-324) (Yeast) protein is Transcription and mRNA export factor SUS1.